Consider the following 312-residue polypeptide: Ribonuclease Z (312 aa).

Residues H63, H65, D67, H68, H141, D212, and H270 each contribute to the Zn(2+) site. The active-site Proton acceptor is the D67.

It belongs to the RNase Z family. As to quaternary structure, homodimer. Requires Zn(2+) as cofactor.

It carries out the reaction Endonucleolytic cleavage of RNA, removing extra 3' nucleotides from tRNA precursor, generating 3' termini of tRNAs. A 3'-hydroxy group is left at the tRNA terminus and a 5'-phosphoryl group is left at the trailer molecule.. Its function is as follows. Zinc phosphodiesterase, which displays some tRNA 3'-processing endonuclease activity. Probably involved in tRNA maturation, by removing a 3'-trailer from precursor tRNA. The sequence is that of Ribonuclease Z from Latilactobacillus sakei subsp. sakei (strain 23K) (Lactobacillus sakei subsp. sakei).